Reading from the N-terminus, the 297-residue chain is Thiosulfate sulfurtransferase (297 aa).

K14 is subject to N6-acetyllysine; alternate. Residue K14 is modified to N6-succinyllysine; alternate. The region spanning 25-143 is the Rhodanese 1 domain; that stretch reads LGPGLRVLDA…WLKEGHPVTS (119 aa). An O-linked (GlcNAc) serine glycan is attached at S35. S38 is modified (phosphoserine). An N6-acetyllysine; alternate modification is found at K136. Residue K136 is modified to N6-succinyllysine; alternate. Residues 144–159 are hinge; that stretch reads EPSRPEPAVFKATLDR. At K163 the chain carries N6-acetyllysine. The region spanning 173 to 288 is the Rhodanese 2 domain; that stretch reads QSKRFQLVDS…WFHQAPPETR (116 aa). An N6-acetyllysine; alternate modification is found at K175. Position 175 is an N6-succinyllysine; alternate (K175). Residue R187 coordinates substrate. An N6-acetyllysine; alternate modification is found at K224. The residue at position 224 (K224) is an N6-succinyllysine; alternate. K236 is subject to N6-acetyllysine. An N6-acetyllysine; alternate modification is found at K237. K237 bears the N6-succinyllysine; alternate mark. The Cysteine persulfide intermediate role is filled by C248. K250 contacts substrate.

Monomer.

The protein localises to the mitochondrion matrix. The enzyme catalyses thiosulfate + hydrogen cyanide = thiocyanate + sulfite + 2 H(+). In terms of biological role, together with MRPL18, acts as a mitochondrial import factor for the cytosolic 5S rRNA. Only the nascent unfolded cytoplasmic form is able to bind to the 5S rRNA. Formation of iron-sulfur complexes and cyanide detoxification. Binds molecular oxygen and sulfur. This is Thiosulfate sulfurtransferase (TST) from Cricetulus griseus (Chinese hamster).